The primary structure comprises 142 residues: Large ribosomal subunit protein uL11 (142 aa).

This sequence belongs to the universal ribosomal protein uL11 family. Part of the ribosomal stalk of the 50S ribosomal subunit. Interacts with L10 and the large rRNA to form the base of the stalk. L10 forms an elongated spine to which L12 dimers bind in a sequential fashion forming a multimeric L10(L12)X complex. One or more lysine residues are methylated.

In terms of biological role, forms part of the ribosomal stalk which helps the ribosome interact with GTP-bound translation factors. In Pectobacterium carotovorum subsp. carotovorum (strain PC1), this protein is Large ribosomal subunit protein uL11.